The sequence spans 313 residues: PGR5-like protein 1B, chloroplastic (313 aa).

A chloroplast-targeting transit peptide spans 1–49 (MAFTLTIPRFSAISRKPITCSSSRTQCPAPFTHGRSISLRRRLTLLPLK). An N-acetylalanine modification is found at A50. At 50 to 187 (ASTDQSGQVG…KVYSDLAIDY (138 aa)) the chain is on the stromal side. C71 and C172 are joined by a disulfide. The chain crosses the membrane as a helical span at residues 188-208 (FKMFLLNVPATVVALGLFFFL). The Lumenal, thylakoid segment spans residues 209–225 (DDITGFEITYLLELPEP). Residues 226-246 (FSFIFTWFAAVPAIVYLALSL) traverse the membrane as a helical segment. Over 247 to 313 (TKLILKDFLI…LITLPEGGKA (67 aa)) the chain is Stromal.

The protein belongs to the PGR5 family. As to quaternary structure, homodimer and heterodimer with PGR5. Interacts with PGR5, FD2, psaD1, LFNR1 and LFNR2. Also interacts with petC and a Fe-containing cofactor (FCC). In terms of processing, disulfide bonds; Cys-289 and Cys-292 are probably involved in the formation of disulfide bridges with 'Cys-11' and 'Cys-105' of PGR5 while Cys-261 and Cys-264 are probably involved in the binding of a Fe-containing cofactor (FCC).

The protein localises to the plastid. Its subcellular location is the chloroplast thylakoid membrane. Inhibited by antimycin A. Its function is as follows. Ferredoxin-plastoquinone reductase involved in cyclic electron flow (CEF) around photosystem I. The homodimer is probably not involved in CEF. The sequence is that of PGR5-like protein 1B, chloroplastic (PGRL1B) from Arabidopsis thaliana (Mouse-ear cress).